Consider the following 540-residue polypeptide: Phosphatidylinositol 4-phosphate 5-kinase type-1 beta (540 aa).

The disordered stretch occupies residues 1-23 (MSSVTENGDVTAGKPNEEKTYKK). The 371-residue stretch at 25–395 (TSSAIKGAIQ…RFLKFMNTRV (371 aa)) folds into the PIPK domain.

The protein localises to the cytoplasm. Its subcellular location is the cytosol. It is found in the cell membrane. It localises to the endomembrane system. The enzyme catalyses a 1,2-diacyl-sn-glycero-3-phospho-(1D-myo-inositol 4-phosphate) + ATP = a 1,2-diacyl-sn-glycero-3-phospho-(1D-myo-inositol-4,5-bisphosphate) + ADP + H(+). It catalyses the reaction 1-octadecanoyl-2-(5Z,8Z,11Z,14Z)-eicosatetraenoyl-sn-glycero-3-phospho-1D-myo-inositol 4-phosphate + ATP = 1-octadecanoyl-2-(5Z,8Z,11Z,14Z)-eicosatetraenoyl-sn-glycero-3-phospho-1D-myo-inositol 4,5-bisphosphate + ADP + H(+). The catalysed reaction is 1-octadecanoyl-2-(9Z)-octadecenoyl-sn-glycero-3-phospho-1D-myo-inositol 4-phosphate + ATP = 1-octadecanoyl-2-(9Z)-octadecenoyl-sn-glycero-3-phospho-1D-myo-inositol 4,5-bisphosphate + ADP + H(+). It carries out the reaction 1-octadecanoyl-2-(9Z)-octadecenoyl-sn-glycero-3-phospho-1D-myo-inositol + ATP = 1-octadecanoyl-2-(9Z)-octadecenoyl-sn-glycero-3-phospho-1D-myo-inositol 5-phosphate + ADP + H(+). The enzyme catalyses 1-octadecanoyl-2-(9Z,12Z)-octadecadienoyl-sn-glycero-3-phospho-1D-myo-inositol + ATP = 1-octadecanoyl-2-(9Z,12Z)-octadecadienoyl-sn-glycero-3-phospho-1D-myo-inositol 5-phosphate + ADP + H(+). It catalyses the reaction 1-octadecanoyl-2-(5Z,8Z,11Z,14Z-eicosatetraenoyl)-sn-glycero-3-phospho-(1D-myo-inositol) + ATP = 1-octadecanoyl-2-(5Z,8Z,11Z,14Z)-eicosatetraenoyl-sn-glycero-3-phospho-1D-myo-inositol 5-phosphate + ADP + H(+). The catalysed reaction is 1,2-di-(9Z,12Z)-octadecadienoyl-sn-glycero-3-phospho-1D-myo-inositol + ATP = 1,2-di(9Z,12Z)-octadecadienoyl-sn-glycero-3-phospho-1D-myo-inositol 5-phosphate + ADP + H(+). Catalyzes the phosphorylation of phosphatidylinositol 4-phosphate (PtdIns(4)P/PI4P) to form phosphatidylinositol 4,5-bisphosphate (PtdIns(4,5)P2/PIP2), a lipid second messenger that regulates several cellular processes such as signal transduction, vesicle trafficking, actin cytoskeleton dynamics, cell adhesion, and cell motility. PtdIns(4,5)P2 can directly act as a second messenger or can be utilized as a precursor to generate other second messengers: inositol 1,4,5-trisphosphate (IP3), diacylglycerol (DAG) or phosphatidylinositol-3,4,5-trisphosphate (PtdIns(3,4,5)P3/PIP3). The protein is Phosphatidylinositol 4-phosphate 5-kinase type-1 beta (PIP5K1B) of Gallus gallus (Chicken).